The chain runs to 295 residues: Phosphoenolpyruvate phosphomutase (295 aa).

Catalysis depends on Asp-58, which acts as the Nucleophile. Asp-58 provides a ligand contact to Mg(2+).

It belongs to the isocitrate lyase/PEP mutase superfamily. PEP mutase family. As to quaternary structure, homotetramer. It depends on Mg(2+) as a cofactor.

The enzyme catalyses phosphoenolpyruvate + H(+) = 3-phosphonopyruvate. The protein operates within phosphorus metabolism; phosphonate biosynthesis. Formation of a carbon-phosphorus bond by converting phosphoenolpyruvate (PEP) to phosphonopyruvate (P-Pyr). The chain is Phosphoenolpyruvate phosphomutase from Mytilus edulis (Blue mussel).